The primary structure comprises 267 residues: MKAEYADYLRTEMLPTIWCAGCPNGIVLASFIRAVKRGFERDKTVVVSGIGCSGRITQYLDFETVHTTHGRALAFATGIKLAKPELNVVVFMGDGDAVAIGGNHFIHACRRNIDLTAVVINNSLYGMTGGQLAPTTPEGAKTKTSPYGNVERPFDIAKLAIAAGASYVARFTAYQPRWIEKAIFEAMQHHGFSVVEVVTGCPTHQRIKPADLLKHLKENFRRRDNVSLDEIQPTDIGVFKKEVMEEFCEKIEKLRMYVRKGENKENV.

As to quaternary structure, heterotetramer of the KorA, KorB, KorC and KorD subunits.

It catalyses the reaction 2 oxidized [2Fe-2S]-[ferredoxin] + 2-oxoglutarate + CoA = succinyl-CoA + 2 reduced [2Fe-2S]-[ferredoxin] + CO2 + H(+). The protein is 2-oxoglutarate synthase subunit KorB (korB) of Archaeoglobus fulgidus (strain ATCC 49558 / DSM 4304 / JCM 9628 / NBRC 100126 / VC-16).